Consider the following 129-residue polypeptide: MKEVIDTVGRRKTSVARVFMTPGKGRVIINKLPVEEYFRDEVKRLHALRPLVLTEKTEDFDIKVNVKGGGLSGQSGAVSLGIARALTEFDEAARAVLKQERLLTRDPRMVERKKFGRKKARKSFQFSKR.

Belongs to the universal ribosomal protein uS9 family.

In Chlorobium luteolum (strain DSM 273 / BCRC 81028 / 2530) (Pelodictyon luteolum), this protein is Small ribosomal subunit protein uS9.